Here is a 457-residue protein sequence, read N- to C-terminus: Siroheme synthase (457 aa).

The segment at 1–204 (MDHLPIFCQL…NDQKAITETT (204 aa)) is precorrin-2 dehydrogenase /sirohydrochlorin ferrochelatase. NAD(+)-binding positions include 22–23 (DV) and 43–44 (LA). S128 bears the Phosphoserine mark. The segment at 216–457 (GEVVLVGAGP…RDKLNWFSNH (242 aa)) is uroporphyrinogen-III C-methyltransferase. P225 is a binding site for S-adenosyl-L-methionine. D248 functions as the Proton acceptor in the catalytic mechanism. K270 acts as the Proton donor in catalysis. Residues 301-303 (GGD), I306, 331-332 (TA), M382, and G411 each bind S-adenosyl-L-methionine.

It in the N-terminal section; belongs to the precorrin-2 dehydrogenase / sirohydrochlorin ferrochelatase family. This sequence in the C-terminal section; belongs to the precorrin methyltransferase family.

It carries out the reaction uroporphyrinogen III + 2 S-adenosyl-L-methionine = precorrin-2 + 2 S-adenosyl-L-homocysteine + H(+). It catalyses the reaction precorrin-2 + NAD(+) = sirohydrochlorin + NADH + 2 H(+). The catalysed reaction is siroheme + 2 H(+) = sirohydrochlorin + Fe(2+). It functions in the pathway cofactor biosynthesis; adenosylcobalamin biosynthesis; precorrin-2 from uroporphyrinogen III: step 1/1. It participates in cofactor biosynthesis; adenosylcobalamin biosynthesis; sirohydrochlorin from precorrin-2: step 1/1. Its pathway is porphyrin-containing compound metabolism; siroheme biosynthesis; precorrin-2 from uroporphyrinogen III: step 1/1. The protein operates within porphyrin-containing compound metabolism; siroheme biosynthesis; siroheme from sirohydrochlorin: step 1/1. It functions in the pathway porphyrin-containing compound metabolism; siroheme biosynthesis; sirohydrochlorin from precorrin-2: step 1/1. Its function is as follows. Multifunctional enzyme that catalyzes the SAM-dependent methylations of uroporphyrinogen III at position C-2 and C-7 to form precorrin-2 via precorrin-1. Then it catalyzes the NAD-dependent ring dehydrogenation of precorrin-2 to yield sirohydrochlorin. Finally, it catalyzes the ferrochelation of sirohydrochlorin to yield siroheme. The protein is Siroheme synthase of Escherichia coli O45:K1 (strain S88 / ExPEC).